The following is a 278-amino-acid chain: HTH-type transcriptional activator RhaS (278 aa).

The HTH araC/xylS-type domain occupies 174-272 (NQLMAWLEDH…NWSPRDIRQG (99 aa)). 2 DNA-binding regions (H-T-H motif) span residues 191 to 212 (EAVAEQFSLSLRTLHRQLKQHT) and 239 to 262 (VTEIAYRCGFGDSNHFSTLFRREF).

In terms of assembly, binds DNA as a dimer.

The protein localises to the cytoplasm. Its function is as follows. Activates expression of the rhaBAD and rhaT operons. The sequence is that of HTH-type transcriptional activator RhaS from Salmonella heidelberg (strain SL476).